Consider the following 182-residue polypeptide: ATP synthase subunit delta (182 aa).

Belongs to the ATPase delta chain family. As to quaternary structure, F-type ATPases have 2 components, F(1) - the catalytic core - and F(0) - the membrane proton channel. F(1) has five subunits: alpha(3), beta(3), gamma(1), delta(1), epsilon(1). CF(0) has four main subunits: a(1), b(1), b'(1) and c(10-14). The alpha and beta chains form an alternating ring which encloses part of the gamma chain. F(1) is attached to F(0) by a central stalk formed by the gamma and epsilon chains, while a peripheral stalk is formed by the delta, b and b' chains.

Its subcellular location is the cellular thylakoid membrane. Its function is as follows. F(1)F(0) ATP synthase produces ATP from ADP in the presence of a proton or sodium gradient. F-type ATPases consist of two structural domains, F(1) containing the extramembraneous catalytic core and F(0) containing the membrane proton channel, linked together by a central stalk and a peripheral stalk. During catalysis, ATP synthesis in the catalytic domain of F(1) is coupled via a rotary mechanism of the central stalk subunits to proton translocation. This protein is part of the stalk that links CF(0) to CF(1). It either transmits conformational changes from CF(0) to CF(1) or is implicated in proton conduction. In Microcystis aeruginosa (strain NIES-843 / IAM M-2473), this protein is ATP synthase subunit delta.